Reading from the N-terminus, the 1394-residue chain is Leucine-rich PPR motif-containing protein, mitochondrial (1394 aa).

A mitochondrion-targeting transit peptide spans 1-59; the sequence is MAALLRSARWLLRAGAAPRLPLSLRLLPGGPGRLHAASYLPAARAGPVAGGLLSPARLY. PPR repeat units follow at residues 126 to 160, 161 to 195, 196 to 230, 231 to 265, 266 to 300, 301 to 335, 403 to 437, and 438 to 472; these read LLRSCGSLLPELKLEERTEFAHRIWDTLQKLGAVY, DVSHYNALLKVYLQNEYKFSPTDFLAKMEEANIQP, NRVTYQRLIASYCNVGDIEGASKILGFMKTKDLPV, TEAVFSALVTGHARAGDMENAENILTVMRDAGIEP, GPDTYLALLNAYAEKGDIDHVKQTLEKVEKSELHL, MDRDLLQIIFSFSKAGYPQYVSEILEKVTCERRYI, HSFPLQFTLHCALLANKTDLAKALMKAVKEEGFPI, and RPHYFWPLLVGRRKEKNVQGIIEILKGMQELGVHP. N6-acetyllysine occurs at positions 155, 187, and 226. Lysine 292 bears the N6-acetyllysine mark. Lysine 463 and lysine 613 each carry N6-acetyllysine. PPR repeat units lie at residues 678–709, 710–746, 747–784, 785–820, 821–856, and 954–988; these read IRDVLKQLILVLCSEENMQKALELKAKYESDM, VTGGYAALINLCCRHDKVEDALNLKEEFDRLDSSAVL, DTGKYVGLVRVLAKHGKLQDAINILKEMKEKDVLIKDT, TALSFFHMLNGAALRGEIETVKQLHEAIVTLGLAEP, STNISFPLVTVHLEKGDLSTALEVAIDCYEKYKVLP, and RDQMYYNLLKLYKINGDWQRADAVWNKIQEENVIP. The interval 712 to 1067 is interaction with BECN1 and Aedes aegypti venom allergen-1; the sequence is GGYAALINLC…AKEQNIVFNA (356 aa). 2 positions are modified to N6-acetyllysine: lysine 726 and lysine 750. 3 positions are modified to phosphoserine: serine 1026, serine 1027, and serine 1029. PPR repeat units follow at residues 1031–1065, 1066–1102, 1103–1137, 1138–1175, 1176–1210, and 1317–1351; these read TEPDFQKDILIACRLNQKKGAYDIFLNAKEQNIVF, NAETYSNLIKLLMSEDYFTQAMEVKAFAETHIKGFTL, NDAANSRLIITQVRRDYLKEAVTTLKTVLDQQQTP, SRLAVTRVIQALAMKGDVENIEVVQKMLNGLEDSIGLS, KMVFINNIALAQIKNNNIDAAIENIENMLTSENKV, and KEEAYNSLMKSYVSEKDVTSAKALYEHLTAKNTKL. The segment at 1121 to 1394 is RNA-binding; it reads KEAVTTLKTV…QLRKLRENSS (274 aa). The residue at position 1136 (threonine 1136) is a Phosphothreonine. Phosphoserine is present on serine 1138.

Component of mRNP complexes associated with HNRPA1. Component of the complex, at least composed of LRPPRC, BECN1 and BCL2; the interactions prevent BECN1 from forming an autophagy-inducing complex with PIK3C3. Interacts with CECR2, HEBP2, MAP1S and UXT. Interacts with PPARGC1A. Interacts with FOXO1. Interacts (via N-terminus) with EIF4E; the interaction promotes association of EIF4E with 4ESE-containing mRNAs. Interacts with exportin XPO1/CRM1; interacts both alone and in complex with EIF4E and 4ESE-containing mRNAs to form an EIF4E-dependent mRNA export complex. Interacts with importin IPO8; the interaction occurs when LRPPRC is in its RNA-free form and returns LRPPRC to the nucleus for further export rounds. Interacts with BECN1. Interacts with Aedes aegypti venom allergen-1; the interaction interrupts BECN1 and LRPPRC association. In terms of tissue distribution, expressed ubiquitously. Expression is highest in heart, skeletal muscle, kidney and liver, intermediate in brain, non-mucosal colon, spleen and placenta, and lowest in small intestine, thymus, lung and peripheral blood leukocytes.

Its subcellular location is the mitochondrion. It localises to the nucleus. It is found in the nucleoplasm. The protein resides in the nucleus inner membrane. The protein localises to the nucleus outer membrane. May play a role in RNA metabolism in both nuclei and mitochondria. In the nucleus binds to HNRPA1-associated poly(A) mRNAs and is part of nmRNP complexes at late stages of mRNA maturation which are possibly associated with nuclear mRNA export. Positively modulates nuclear export of mRNAs containing the EIF4E sensitivity element (4ESE) by binding simultaneously to both EIF4E and the 4ESE and acting as a platform for assembly for the RNA export complex. Also binds to exportin XPO1/CRM1 to engage the nuclear pore and traffic the bound mRNAs to the cytoplasm. May bind mature mRNA in the nucleus outer membrane. In mitochondria binds to poly(A) mRNA. Plays a role in translation or stability of mitochondrially encoded cytochrome c oxidase (COX) subunits. May be involved in transcription regulation. Cooperates with PPARGC1A to regulate certain mitochondrially encoded genes and gluconeogenic genes and may regulate docking of PPARGC1A to transcription factors. Seems to be involved in the transcription regulation of the multidrug-related genes MDR1 and MVP. Part of a nuclear factor that binds to the invMED1 element of MDR1 and MVP gene promoters. Binds single-stranded DNA. Required for maintaining mitochondrial potential. Suppresses the initiation of basal levels of autophagy and mitophagy by sustaining BCL2 levels. In Homo sapiens (Human), this protein is Leucine-rich PPR motif-containing protein, mitochondrial (LRPPRC).